The primary structure comprises 500 residues: Cytochrome P450 71B35 (500 aa).

The helical transmembrane segment at 1–21 (MAHIWLLPLIFLVCILLAVFN) threads the bilayer. Cys439 contacts heme.

The protein belongs to the cytochrome P450 family. The cofactor is heme.

Its subcellular location is the membrane. The protein is Cytochrome P450 71B35 (CYP71B35) of Arabidopsis thaliana (Mouse-ear cress).